A 375-amino-acid chain; its full sequence is 4-hydroxy-3-methylbut-2-en-1-yl diphosphate synthase (flavodoxin) (375 aa).

[4Fe-4S] cluster-binding residues include cysteine 275, cysteine 278, cysteine 310, and glutamate 317.

The protein belongs to the IspG family. [4Fe-4S] cluster serves as cofactor.

It carries out the reaction (2E)-4-hydroxy-3-methylbut-2-enyl diphosphate + oxidized [flavodoxin] + H2O + 2 H(+) = 2-C-methyl-D-erythritol 2,4-cyclic diphosphate + reduced [flavodoxin]. Its pathway is isoprenoid biosynthesis; isopentenyl diphosphate biosynthesis via DXP pathway; isopentenyl diphosphate from 1-deoxy-D-xylulose 5-phosphate: step 5/6. Its function is as follows. Converts 2C-methyl-D-erythritol 2,4-cyclodiphosphate (ME-2,4cPP) into 1-hydroxy-2-methyl-2-(E)-butenyl 4-diphosphate. The polypeptide is 4-hydroxy-3-methylbut-2-en-1-yl diphosphate synthase (flavodoxin) (Ruegeria pomeroyi (strain ATCC 700808 / DSM 15171 / DSS-3) (Silicibacter pomeroyi)).